A 419-amino-acid polypeptide reads, in one-letter code: GTPase Obg (419 aa).

An Obg domain is found at 1–158; sequence MIFIDTAEII…RRLRLELKLV (158 aa). Positions 159–328 constitute an OBG-type G domain; it reads AHVGLVGLPN…LVDVLFELIS (170 aa). GTP contacts are provided by residues 165 to 172, 190 to 194, 211 to 214, 281 to 284, and 309 to 311; these read GLPNAGKS, FTTRS, DVPG, NKID, and SAA. The Mg(2+) site is built by Ser172 and Thr192. Residues 344 to 419 enclose the OCT domain; that stretch reads ELPPLPEDFS…VIHDKAFEIL (76 aa).

Belongs to the TRAFAC class OBG-HflX-like GTPase superfamily. OBG GTPase family. In terms of assembly, monomer. The cofactor is Mg(2+).

It is found in the cytoplasm. In terms of biological role, an essential GTPase which binds GTP, GDP and possibly (p)ppGpp with moderate affinity, with high nucleotide exchange rates and a fairly low GTP hydrolysis rate. Plays a role in control of the cell cycle, stress response, ribosome biogenesis and in those bacteria that undergo differentiation, in morphogenesis control. In Coprothermobacter proteolyticus (strain ATCC 35245 / DSM 5265 / OCM 4 / BT), this protein is GTPase Obg.